The primary structure comprises 142 residues: Large ribosomal subunit protein uL11 (142 aa).

This sequence belongs to the universal ribosomal protein uL11 family. Part of the ribosomal stalk of the 50S ribosomal subunit. Interacts with L10 and the large rRNA to form the base of the stalk. L10 forms an elongated spine to which L12 dimers bind in a sequential fashion forming a multimeric L10(L12)X complex. In terms of processing, one or more lysine residues are methylated.

Forms part of the ribosomal stalk which helps the ribosome interact with GTP-bound translation factors. This is Large ribosomal subunit protein uL11 from Yersinia pseudotuberculosis serotype O:1b (strain IP 31758).